A 71-amino-acid polypeptide reads, in one-letter code: Exodeoxyribonuclease 7 small subunit (71 aa).

The protein belongs to the XseB family. In terms of assembly, heterooligomer composed of large and small subunits.

It localises to the cytoplasm. It carries out the reaction Exonucleolytic cleavage in either 5'- to 3'- or 3'- to 5'-direction to yield nucleoside 5'-phosphates.. Its function is as follows. Bidirectionally degrades single-stranded DNA into large acid-insoluble oligonucleotides, which are then degraded further into small acid-soluble oligonucleotides. The polypeptide is Exodeoxyribonuclease 7 small subunit (Streptococcus equi subsp. zooepidemicus (strain H70)).